Consider the following 105-residue polypeptide: UPF0045 protein ECM15 (105 aa).

This sequence belongs to the UPF0045 family.

This chain is UPF0045 protein ECM15 (ECM15), found in Eremothecium gossypii (strain ATCC 10895 / CBS 109.51 / FGSC 9923 / NRRL Y-1056) (Yeast).